We begin with the raw amino-acid sequence, 147 residues long: Male-specific protein scotti (147 aa).

Residues 57–76 form a disordered region; sequence EPPLGVFPAQGGPNGPPRLR. N-linked (GlcNAc...) asparagine glycosylation is present at N128.

The protein belongs to the male-specific scotti family.

Functionally, post-meiotically transcribed gene that has a role in late spermiogenesis; required for actin cone progression during spermatid individualization. This chain is Male-specific protein scotti, found in Drosophila simulans (Fruit fly).